Here is a 224-residue protein sequence, read N- to C-terminus: Ribose-5-phosphate isomerase A 1 (224 aa).

Substrate-binding positions include 29-32 (SGST), 85-88 (DGAD), and 98-101 (KGGG). Glutamate 107 serves as the catalytic Proton acceptor. Lysine 125 provides a ligand contact to substrate.

The protein belongs to the ribose 5-phosphate isomerase family. Homodimer.

The enzyme catalyses aldehydo-D-ribose 5-phosphate = D-ribulose 5-phosphate. The protein operates within carbohydrate degradation; pentose phosphate pathway; D-ribose 5-phosphate from D-ribulose 5-phosphate (non-oxidative stage): step 1/1. In terms of biological role, catalyzes the reversible conversion of ribose-5-phosphate to ribulose 5-phosphate. The protein is Ribose-5-phosphate isomerase A 1 of Oceanobacillus iheyensis (strain DSM 14371 / CIP 107618 / JCM 11309 / KCTC 3954 / HTE831).